The chain runs to 139 residues: Hydrogenase maturation factor HypA (139 aa).

Residue His2 participates in Ni(2+) binding. Residues Cys73, Cys76, Cys110, and Cys113 each coordinate Zn(2+).

The protein belongs to the HypA/HybF family.

In terms of biological role, involved in the maturation of [NiFe] hydrogenases. Required for nickel insertion into the metal center of the hydrogenase. This is Hydrogenase maturation factor HypA from Pyrococcus furiosus (strain ATCC 43587 / DSM 3638 / JCM 8422 / Vc1).